A 1104-amino-acid chain; its full sequence is Valine--tRNA ligase, mitochondrial (1104 aa).

A mitochondrion-targeting transit peptide spans 1–47 (MNKWLNTLSKTFTFRLLNCHYRRSLPLCQNFSLKKSLTHNQVRFFKM). At Ser-73 the chain carries Phosphoserine. Residues 99 to 119 (KKNAAATTGASQKKPKKKKEV) are disordered. The 'HIGH' region motif lies at 190–200 (PNVTGALHIGH). Phosphoserine occurs at positions 294 and 332. Residues 703–707 (KMSKS) carry the 'KMSKS' region motif. Lys-706 contributes to the ATP binding site. Ser-707 carries the post-translational modification Phosphoserine. Thr-1003 carries the post-translational modification Phosphothreonine.

This sequence belongs to the class-I aminoacyl-tRNA synthetase family.

It is found in the cytoplasm. The protein localises to the mitochondrion. The enzyme catalyses tRNA(Val) + L-valine + ATP = L-valyl-tRNA(Val) + AMP + diphosphate. The polypeptide is Valine--tRNA ligase, mitochondrial (VAS1) (Saccharomyces cerevisiae (strain ATCC 204508 / S288c) (Baker's yeast)).